The following is a 76-amino-acid chain: Peptide ARACIN 1 (76 aa).

Residues 1–22 form the signal peptide; it reads MAMKTSHVLLLCLMFVIGFVEA. Positions 23–35 are cleaved as a propeptide — removed in mature form; it reads RRSDTGPDISTPP. Residues 36 to 38 carry the SxS motif essential for MIK2 binding motif; it reads SGS. Positions 36-49 match the SCOOP motif motif; sequence SGSCGASIAEFNSS. Residues 56–76 form a disordered region; sequence APPCRRPRLQNSEDVTHTTLP. Over residues 64–76 the composition is skewed to polar residues; that stretch reads LQNSEDVTHTTLP.

It belongs to the serine rich endogenous peptide (SCOOP) phytocytokine family. As to quaternary structure, interacts with MIK2 (via extracellular leucine-rich repeat domain); this interaction triggers the formation of complex between MIK2 and the BAK1/SERK3 and SERK4 coreceptors, and subsequent BAK1 activation by phosphorylation. Mainly expressed in young developing leaves, hydathodes, immature flowers and elongating pollen tubes.

The protein resides in the cell membrane. It localises to the secreted. Its subcellular location is the extracellular space. It is found in the apoplast. The protein localises to the endoplasmic reticulum. Brassicaceae-specific phytocytokine (plant endogenous peptide released into the apoplast) perceived by MIK2 in a BAK1/SERK3 and SERK4 coreceptors-dependent manner, that modulates various physiological and antimicrobial processes including growth prevention and reactive oxygen species (ROS) response regulation. Inhibits the fungal growth of Alternaria brassicicola, Sclerotinia sclerotiorum, Fusarium graminearum, yeast (Saccharomyces) and Botrytis cinerea, thus being an antimicrobial peptide (AMP). Promotes resistance to A.brassicicola and B.cinerea. The chain is Peptide ARACIN 1 from Arabidopsis thaliana (Mouse-ear cress).